A 132-amino-acid chain; its full sequence is Translation initiation factor 5A (132 aa).

Position 36 is a hypusine (Lys36).

This sequence belongs to the eIF-5A family.

It is found in the cytoplasm. In terms of biological role, functions by promoting the formation of the first peptide bond. The sequence is that of Translation initiation factor 5A (eIF5A) from Thermofilum pendens (strain DSM 2475 / Hrk 5).